Here is a 403-residue protein sequence, read N- to C-terminus: Phosphoglycerate kinase (403 aa).

Residues 24 to 26 (DLN), Arg39, 62 to 65 (HLGR), Arg121, and Arg161 each bind substrate. Residues Lys211, Gly299, Glu330, and 359–362 (GGDS) contribute to the ATP site.

This sequence belongs to the phosphoglycerate kinase family. Monomer.

It is found in the cytoplasm. The catalysed reaction is (2R)-3-phosphoglycerate + ATP = (2R)-3-phospho-glyceroyl phosphate + ADP. Its pathway is carbohydrate degradation; glycolysis; pyruvate from D-glyceraldehyde 3-phosphate: step 2/5. The polypeptide is Phosphoglycerate kinase (Rhodococcus erythropolis (strain PR4 / NBRC 100887)).